A 105-amino-acid chain; its full sequence is uncharacterized protein (105 aa).

A helical membrane pass occupies residues 8-28; the sequence is FMTAGIIIALIIAVLAPFLAS. The tract at residues 32–53 is disordered; the sequence is DGLESTAEKVMPNPETEPVLES. Residues 72–92 form a helical membrane-spanning segment; the sequence is VSMVIGTILVLAIAYGVGAVF.

This sequence to M.jannaschii MJ1570.

Its subcellular location is the cell membrane. This is an uncharacterized protein from Methanothermobacter thermautotrophicus (strain ATCC 29096 / DSM 1053 / JCM 10044 / NBRC 100330 / Delta H) (Methanobacterium thermoautotrophicum).